Here is a 684-residue protein sequence, read N- to C-terminus: uncharacterized protein (684 aa).

Residues Leu-54 to Val-239 enclose the Helicase ATP-binding domain. ATP is bound at residue Thr-67–Ser-74. The short motif at Asp-181–His-184 is the DEVH box element. The region spanning Leu-264–Phe-419 is the Helicase C-terminal domain.

Belongs to the helicase family.

This is an uncharacterized protein from Methanocaldococcus jannaschii (strain ATCC 43067 / DSM 2661 / JAL-1 / JCM 10045 / NBRC 100440) (Methanococcus jannaschii).